The chain runs to 802 residues: Leucine--tRNA ligase (802 aa).

Residues 40–51 (PYPSGAGLHVGH) carry the 'HIGH' region motif. The 'KMSKS' region signature appears at 576-580 (KMSKS). Residue lysine 579 participates in ATP binding.

The protein belongs to the class-I aminoacyl-tRNA synthetase family.

The protein localises to the cytoplasm. It catalyses the reaction tRNA(Leu) + L-leucine + ATP = L-leucyl-tRNA(Leu) + AMP + diphosphate. This Bacillus cytotoxicus (strain DSM 22905 / CIP 110041 / 391-98 / NVH 391-98) protein is Leucine--tRNA ligase.